Consider the following 316-residue polypeptide: Retron Ec73 putative ribosyltransferase/DNA-binding protein (316 aa).

In terms of biological role, possible ribosyltransferase/DNA-binding component of antiviral defense system retron Ec73, composed of a non-coding RNA (ncRNA) followed by this protein then a reverse transcriptase (RT). Expression of this retron confers protection against bacteriophages SECphi4, SECphi6, SECphi27 and P1. At multiplicity of infection (MOI) of 0.02 cultures grow normally when infected with SECphi4 without collapsing, at MOI 2 cultures enter growth stasis. This Escherichia coli protein is Retron Ec73 putative ribosyltransferase/DNA-binding protein.